The sequence spans 715 residues: Fatty acid oxidation complex subunit alpha (715 aa).

Residues 1–190 are enoyl-CoA hydratase/isomerase; the sequence is MIYEGKAITV…KVGAVDAVVA (190 aa). Substrate is bound at residue Asp-297. A 3-hydroxyacyl-CoA dehydrogenase region spans residues 312-715; it reads HDVKQAAVLG…MAKNGQRFFN (404 aa). NAD(+) contacts are provided by residues Met-325, Asp-344, 401-403, Lys-408, and Ser-430; that span reads VVE. Catalysis depends on His-451, which acts as the For 3-hydroxyacyl-CoA dehydrogenase activity. Asn-454 serves as a coordination point for NAD(+). Substrate is bound by residues Asn-501 and Tyr-660.

It in the N-terminal section; belongs to the enoyl-CoA hydratase/isomerase family. This sequence in the C-terminal section; belongs to the 3-hydroxyacyl-CoA dehydrogenase family. As to quaternary structure, heterotetramer of two alpha chains (FadB) and two beta chains (FadA).

It catalyses the reaction a (3S)-3-hydroxyacyl-CoA + NAD(+) = a 3-oxoacyl-CoA + NADH + H(+). The catalysed reaction is a (3S)-3-hydroxyacyl-CoA = a (2E)-enoyl-CoA + H2O. It carries out the reaction a 4-saturated-(3S)-3-hydroxyacyl-CoA = a (3E)-enoyl-CoA + H2O. The enzyme catalyses (3S)-3-hydroxybutanoyl-CoA = (3R)-3-hydroxybutanoyl-CoA. It catalyses the reaction a (3Z)-enoyl-CoA = a 4-saturated (2E)-enoyl-CoA. The catalysed reaction is a (3E)-enoyl-CoA = a 4-saturated (2E)-enoyl-CoA. The protein operates within lipid metabolism; fatty acid beta-oxidation. Involved in the aerobic and anaerobic degradation of long-chain fatty acids via beta-oxidation cycle. Catalyzes the formation of 3-oxoacyl-CoA from enoyl-CoA via L-3-hydroxyacyl-CoA. It can also use D-3-hydroxyacyl-CoA and cis-3-enoyl-CoA as substrate. The chain is Fatty acid oxidation complex subunit alpha from Pseudomonas putida (Arthrobacter siderocapsulatus).